The sequence spans 466 residues: Magnetosome-associated protein MamJ (466 aa).

Disordered regions lie at residues 1–23 and 60–80; these read MAKNRRDRGTDLPGDGDQKISTG and ANQGGLVETAQPPSAPIRSQD. The not required to restore magnetic response to deletion mutant stretch occupies residues 1–24; the sequence is MAKNRRDRGTDLPGDGDQKISTGP. The segment at 25–80 is required to restore magnetic response to deletion mutant; it reads EIVSVTVHPSPNLAAAAKPVQGDIWASLLESSPWSANQGGLVETAQPPSAPIRSQD. Tandem repeat unit repeat units lie at residues 81–168 and 169–256; these read PVPV…VEPE and PAPV…VEPE. Not required to restore magnetic response to deletion mutant regions lie at residues 81-256, 136-334, 333-374, and 432-466; these read PVPV…VEPE, ETDA…SQAE, AESV…AVEA, and VGSNVVAGTRRLAQTIEVSCGSCSSPKCDAEDKNK. Glu-Pro-rich motif repeat units follow at residues 145-164, 233-252, and 253-272; these read IEPEPALVEPVIEIEAEAAE and VEPEPAPVEPVIEIEAEAAE. 2 required to restore magnetic response to deletion mutant regions span residues 375-432 and 426-466; these read TRQP…GRLV and VKGG…DKNK.

It belongs to the magnetosome MamJ protein family. In terms of assembly, forms homooligomers. Interacts with MamK. Identified by N-terminal sequencing of a protein that is about 96 kDa in size. The protein runs anomalously on protein gels.

The protein resides in the magnetosome. Functionally, required for assembly of magnetosome chains. Regulates the dynamic behavior of MamK filaments. May connect magnetosomes to MamK filaments. Moves from the cell poles towards midcell; movement does not depend on the treadmilling ability of MamK, suggesting MamJ associates and disassociates continuously from the MamK filament. This Magnetospirillum gryphiswaldense (strain DSM 6361 / JCM 21280 / NBRC 15271 / MSR-1) protein is Magnetosome-associated protein MamJ.